Consider the following 413-residue polypeptide: Tyrosine--tRNA ligase (413 aa).

Tyr-34 contributes to the L-tyrosine binding site. The 'HIGH' region signature appears at 39-48; that stretch reads PTSHSLTVGH. L-tyrosine is bound by residues Tyr-164 and Gln-168. Positions 225–229 match the 'KMSKS' region motif; the sequence is KFGKS. Lys-228 is a binding site for ATP. Positions 347-413 constitute an S4 RNA-binding domain; sequence ILLVDALVQT…GKKNNALIVF (67 aa).

It belongs to the class-I aminoacyl-tRNA synthetase family. TyrS type 1 subfamily. Homodimer.

It localises to the cytoplasm. It catalyses the reaction tRNA(Tyr) + L-tyrosine + ATP = L-tyrosyl-tRNA(Tyr) + AMP + diphosphate + H(+). Functionally, catalyzes the attachment of tyrosine to tRNA(Tyr) in a two-step reaction: tyrosine is first activated by ATP to form Tyr-AMP and then transferred to the acceptor end of tRNA(Tyr). The protein is Tyrosine--tRNA ligase of Aster yellows witches'-broom phytoplasma (strain AYWB).